The following is a 470-amino-acid chain: Neuraminidase (470 aa).

Topologically, residues 1–14 (MNPNQKIITIGSAS) are intravirion. An involved in apical transport and lipid raft association region spans residues 11–32 (GSASLGLVFLNVILHVVSITVT). The helical transmembrane segment at 15–35 (LGLVFLNVILHVVSITVTVLV) threads the bilayer. The hypervariable stalk region stretch occupies residues 32 to 86 (TVLVLSNNVTGPNCNGTIIREYNGTVRIERITQWYNTNIIEYIERPSNEYYMSNT). Residues 36–470 (LSNNVTGPNC…AILPFDIDKM (435 aa)) are Virion surface-facing. 3 N-linked (GlcNAc...) asparagine; by host glycosylation sites follow: N39, N46, and N54. The interval 89–470 (LCEAQGFAPF…AILPFDIDKM (382 aa)) is head of neuraminidase. Intrachain disulfides connect C90/C417, C122/C127, C182/C229, C231/C236, C277/C290, C279/C288, C316/C335, and C421/C446. R116 contributes to the substrate binding site. Residue N144 is glycosylated (N-linked (GlcNAc...) asparagine; by host). The Proton donor/acceptor role is filled by D149. R150 contributes to the substrate binding site. Residue 275–276 (EE) participates in substrate binding. A substrate-binding site is contributed by R291. D292 lines the Ca(2+) pocket. The N-linked (GlcNAc...) asparagine; by host glycan is linked to N293. Residues G296 and D322 each contribute to the Ca(2+) site. R368 is a binding site for substrate. N398 carries N-linked (GlcNAc...) asparagine; by host glycosylation. Residue Y402 is the Nucleophile of the active site.

The protein belongs to the glycosyl hydrolase 34 family. In terms of assembly, homotetramer. The cofactor is Ca(2+). In terms of processing, N-glycosylated.

The protein resides in the virion membrane. The protein localises to the host apical cell membrane. It catalyses the reaction Hydrolysis of alpha-(2-&gt;3)-, alpha-(2-&gt;6)-, alpha-(2-&gt;8)- glycosidic linkages of terminal sialic acid residues in oligosaccharides, glycoproteins, glycolipids, colominic acid and synthetic substrates.. Its activity is regulated as follows. Inhibited by the neuraminidase inhibitors zanamivir (Relenza) and oseltamivir (Tamiflu). These drugs interfere with the release of progeny virus from infected cells and are effective against all influenza strains. Resistance to neuraminidase inhibitors is quite rare. Functionally, catalyzes the removal of terminal sialic acid residues from viral and cellular glycoconjugates. Cleaves off the terminal sialic acids on the glycosylated HA during virus budding to facilitate virus release. Additionally helps virus spread through the circulation by further removing sialic acids from the cell surface. These cleavages prevent self-aggregation and ensure the efficient spread of the progeny virus from cell to cell. Otherwise, infection would be limited to one round of replication. Described as a receptor-destroying enzyme because it cleaves a terminal sialic acid from the cellular receptors. May facilitate viral invasion of the upper airways by cleaving the sialic acid moieties on the mucin of the airway epithelial cells. Likely to plays a role in the budding process through its association with lipid rafts during intracellular transport. May additionally display a raft-association independent effect on budding. Plays a role in the determination of host range restriction on replication and virulence. Sialidase activity in late endosome/lysosome traffic seems to enhance virus replication. The protein is Neuraminidase of Aves (Horse).